Here is a 400-residue protein sequence, read N- to C-terminus: Lysophospholipid transporter LplT (400 aa).

Helical transmembrane passes span Val19–Ala39, Val53–Ala73, Ala91–Ile111, Leu139–Ala159, Ile164–Ile184, Ser195–Trp213, Leu227–Leu247, Tyr257–Val277, Thr281–Leu301, Ala304–Val324, Asn352–Ala372, and Val373–Trp393.

It belongs to the major facilitator superfamily. LplT (TC 2.A.1.42) family.

Its subcellular location is the cell inner membrane. Functionally, catalyzes the facilitated diffusion of 2-acyl-glycero-3-phosphoethanolamine (2-acyl-GPE) into the cell. This is Lysophospholipid transporter LplT from Salmonella schwarzengrund (strain CVM19633).